We begin with the raw amino-acid sequence, 902 residues long: Androgen receptor (902 aa).

Positions 1–540 are modulating; that stretch reads MEVQLGLGRV…PIDYYFPPQK (540 aa). The segment at 1–569 is interaction with ZNF318; it reads MEVQLGLGRV…GSCKVFFKRA (569 aa). 2 disordered regions span residues 35–146 and 194–224; these read QNPG…LSLL and QQEVISEGSSSVRAREATGAPSSSKDSYLGG. The residue at position 61 (Ser61) is a Phosphoserine; by CDK9. At Ser75 the chain carries Phosphoserine. Residues 94–103 show a composition bias toward low complexity; that stretch reads QPSQQQSASE. Polar residues-rich tracts occupy residues 196 to 205 and 213 to 224; these read EVISEGSSSV and APSSSKDSYLGG. Tyr221 carries the phosphotyrosine; by CSK modification. Residue Ser254 is modified to Phosphoserine. Tyr265 is modified (phosphotyrosine; by CSK and TNK2). Ser290 is subject to Phosphoserine. 4 positions are modified to phosphotyrosine; by CSK: Tyr305, Tyr344, Tyr355, and Tyr360. Tyr361 is modified (phosphotyrosine; by CSK and TNK2). A Glycyl lysine isopeptide (Lys-Gly) (interchain with G-Cter in SUMO) cross-link involves residue Lys384. Tyr391 bears the Phosphotyrosine; by CSK mark. Positions 439–465 are disordered; sequence EGQLYGPGGGGGSSSPSDAGPVAPYGY. A Glycyl lysine isopeptide (Lys-Gly) (interchain with G-Cter in SUMO) cross-link involves residue Lys503. Tyr517 and Tyr534 each carry phosphotyrosine; by CSK. An interaction with LPXN region spans residues 534 to 901; the sequence is YYFPPQKTCL…GKVKPIYFHT (368 aa). The segment at residues 541 to 614 is a DNA-binding region (nuclear receptor); that stretch reads TCLICGDEAS…AGMTLGARKL (74 aa). 2 consecutive NR C4-type zinc fingers follow at residues 542–562 and 578–602; these read CLICGDEASGCHYGALTCGSC and CASRNDCTIDKFRRKNCPSCRLRKC. Residues 554–644 form an interaction with HIPK3 region; sequence YGALTCGSCK…TEDPSQKMTV (91 aa). An interaction with CCAR1 region spans residues 574–901; that stretch reads QKYLCASRND…GKVKPIYFHT (328 aa). The segment at 607–901 is interaction with KAT7; it reads MTLGARKLKK…GKVKPIYFHT (295 aa). Ser633 is modified (phosphoserine). The NR LBD domain maps to 651 to 882; that stretch reads ECQPIFLNVL…DFPEMMAEII (232 aa). Positions 688 and 735 each coordinate 17beta-hydroxy-5alpha-androstan-3-one. Glycyl lysine isopeptide (Lys-Gly) (interchain with G-Cter in ubiquitin) cross-links involve residues Lys828 and Lys830. Thr860 contacts 17beta-hydroxy-5alpha-androstan-3-one. Phosphotyrosine; by CSK is present on Tyr898.

This sequence belongs to the nuclear hormone receptor family. NR3 subfamily. In terms of assembly, binds DNA as a homodimer. Part of a ternary complex containing AR, EFCAB6/DJBP and PARK7. Interacts with HIPK3 and NR0B2 in the presence of androgen. The ligand binding domain interacts with KAT7/HBO1 in the presence of dihydrotestosterone. Interacts with EFCAB6/DJBP, PQBP1, RANBP9, RBAK, SPDEF, SRA1, TGFB1I1, ZNF318 and RREB1. Interacts with ZMIZ1/ZIMP10 and ZMIZ2/ZMIP7 which both enhance its transactivation activity. Interacts with SLC30A9 and RAD54L2/ARIP4. Interacts with MACROD1 (via macro domain). Interacts via the ligand-binding domain with LXXLL and FXXLF motifs from NCOA1, NCOA2, NCOA3 and MAGEA11. Interacts (via nuclear receptor DNA binding domain and nuclear receptor ligand binding domain) with NCOA4. The AR N-terminal poly-Gln region binds Ran resulting in enhancement of AR-mediated transactivation. Ran-binding decreases as the poly-Gln length increases. Interacts with HIP1 (via coiled coil domain). Interacts (via ligand-binding domain) with TRIM68. Interacts with TNK2. Interacts with USP26. Interacts with RNF6. Interacts (regulated by RNF6 probably through polyubiquitination) with RNF14; regulates AR transcriptional activity. Interacts with PRMT2 and TRIM24. Interacts with RACK1. Interacts with RANBP10; this interaction enhances dihydrotestosterone-induced AR transcriptional activity. Interacts with PRPF6 in a hormone-independent way; this interaction enhances dihydrotestosterone-induced AR transcriptional activity. Interacts with STK4/MST1. Interacts with ZIPK/DAPK3. Interacts with LPXN. Interacts with MAK. Part of a complex containing AR, MAK and NCOA3. Interacts with CRY1. Interacts with CCAR1 and GATA2. Interacts with BUD31. Interacts with ARID4A. Interacts with ARID4B. Interacts (via NR LBD domain) with ZBTB7A; the interaction is direct and androgen-dependent. Interacts with NCOR1. Interacts with NCOR2. Interacts with CRY2 in a ligand-dependent manner. In terms of processing, phosphorylated in prostate cancer cells in response to several growth factors including EGF. Phosphorylation is induced by c-Src kinase (CSK). Tyr-517 is one of the major phosphorylation sites and an increase in phosphorylation and Src kinase activity is associated with prostate cancer progression. Phosphorylation by TNK2 enhances the DNA-binding and transcriptional activity. Phosphorylation at Ser-61 by CDK9 regulates AR promoter selectivity and cell growth. Phosphorylation by PAK6 leads to AR-mediated transcription inhibition. Sumoylated on Lys-384 (major) and Lys-503. Ubiquitinated. Deubiquitinated by USP26. 'Lys-6' and 'Lys-27'-linked polyubiquitination by RNF6 modulates AR transcriptional activity and specificity. Post-translationally, palmitoylated by ZDHHC7 and ZDHHC21. Palmitoylation is required for plasma membrane targeting and for rapid intracellular signaling via ERK and AKT kinases and cAMP generation. Highest levels in the seminal vesicle, ventral prostate and coagulating gland with lower levels in the kidney and levator ani muscle.

It localises to the nucleus. Its subcellular location is the cytoplasm. Functionally, steroid hormone receptors are ligand-activated transcription factors that regulate eukaryotic gene expression and affect cellular proliferation and differentiation in target tissues. Transcription factor activity is modulated by bound coactivator and corepressor proteins like ZBTB7A that recruits NCOR1 and NCOR2 to the androgen response elements/ARE on target genes, negatively regulating androgen receptor signaling and androgen-induced cell proliferation. Transcription activation is also down-regulated by NR0B2. Activated, but not phosphorylated, by HIPK3 and ZIPK/DAPK3. This Rattus norvegicus (Rat) protein is Androgen receptor (Ar).